A 184-amino-acid chain; its full sequence is uncharacterized protein (184 aa).

The N-terminal stretch at 1 to 20 (MYQLEKIWVLLCLALVGVLG) is a signal peptide.

This is an uncharacterized protein from Drosophila melanogaster (Fruit fly).